The sequence spans 241 residues: PRA1 family protein H (241 aa).

The next 3 membrane-spanning stretches (helical) occupy residues 142 to 162 (LFIV…VGLL), 189 to 205 (LSIG…LTFL), and 209 to 228 (MALF…HAGF).

The protein belongs to the PRA1 family.

The protein localises to the endoplasmic reticulum membrane. May be involved in both secretory and endocytic intracellular trafficking in the endosomal/prevacuolar compartments. The polypeptide is PRA1 family protein H (PRA1H) (Arabidopsis thaliana (Mouse-ear cress)).